The chain runs to 550 residues: Zorya protein ZorA (550 aa).

Helical transmembrane passes span 16–36 (TLITNIFIWAVIFVFLSAWWC), 52–72 (LMGALGILGTFIGIIIGLLNF), and 92–112 (FITSIVGMFFAILFNGMDAFF).

The protein belongs to the MotA family.

It is found in the cell inner membrane. Functionally, component of antiviral defense system Zorya type II, composed of ZorA, ZorB and ZorE. Expression of Zorya type II in E.coli (strain MG1655) confers resistance to phages SECphi7 and T7. While most T7 infected Zorya-containing cells undergo abortive infection, a minority produce viable phage progeny. These eventually accumulate to a high multiplicity of infection, leading to culture collapse by 170 minutes after initial infection. ZorA and ZorB probably assemble in the cell inner membrane and exert their effect there. This is Zorya protein ZorA from Escherichia coli (strain ATCC 8739 / DSM 1576 / NBRC 3972 / NCIMB 8545 / WDCM 00012 / Crooks).